The primary structure comprises 542 residues: POTE ankyrin domain family member C (542 aa).

7 ANK repeats span residues 138 to 171, 172 to 201, 205 to 234, 238 to 267, 271 to 300, 304 to 333, and 337 to 373; these read EDLD…KRDK, QKRT…QLNV, KKRT…DQNI, YGNT…DIES, CGLT…NLNA, YGRT…DVSS, and SGQT…SENS. Residues 369-494 are disordered; that stretch reads SSENSNPEQD…NTGISQDEIL (126 aa). 3 stretches are compositionally biased toward basic and acidic residues: residues 377–392, 401–412, and 466–481; these read QDLK…RLKV, MSQEPEINKDCD, and EEYH…KQLS. Residues 482–494 are compositionally biased toward polar residues; sequence EEQNTGISQDEIL. The stretch at 489 to 538 forms a coiled coil; sequence SQDEILTNKQKQIEVAEKKMNSELSLSHKKEEDLLRENSMLQEEIAMLIS.

Belongs to the POTE family. Expressed in prostate and testis.

This chain is POTE ankyrin domain family member C (POTEC), found in Homo sapiens (Human).